A 372-amino-acid chain; its full sequence is Actin-related protein 2/3 complex subunit 1B (372 aa).

WD repeat units lie at residues 6-45 (FLVE…WTKV), 50-89 (EHNG…WKPT), 94-135 (RINR…WVCK), 140-179 (PIRS…VEER), 242-280 (SETL…GMLS), and 324-367 (LHKN…SALK).

It belongs to the WD repeat ARPC1 family. As to quaternary structure, component of the Arp2/3 complex composed of ACTR2/ARP2, ACTR3/ARP3, ARPC1B/p41-ARC, ARPC2/p34-ARC, ARPC3/p21-ARC, ARPC4/p20-ARC and ARPC5/p16-ARC.

It is found in the cytoplasm. The protein localises to the cytoskeleton. It localises to the nucleus. Its function is as follows. Component of the Arp2/3 complex, a multiprotein complex that mediates actin polymerization upon stimulation by nucleation-promoting factor (NPF). The Arp2/3 complex mediates the formation of branched actin networks in the cytoplasm, providing the force for cell motility. In addition to its role in the cytoplasmic cytoskeleton, the Arp2/3 complex also promotes actin polymerization in the nucleus, thereby regulating gene transcription and repair of damaged DNA. The Arp2/3 complex promotes homologous recombination (HR) repair in response to DNA damage by promoting nuclear actin polymerization, leading to drive motility of double-strand breaks (DSBs). The protein is Actin-related protein 2/3 complex subunit 1B of Homo sapiens (Human).